The chain runs to 266 residues: Small ribosomal subunit protein uS2 (266 aa).

The tract at residues 247-266 (EGENNYSNNRSWNKPERTNN) is disordered. Positions 249 to 258 (ENNYSNNRSW) are enriched in polar residues.

It belongs to the universal ribosomal protein uS2 family.

The sequence is that of Small ribosomal subunit protein uS2 from Mesoplasma florum (strain ATCC 33453 / NBRC 100688 / NCTC 11704 / L1) (Acholeplasma florum).